The primary structure comprises 189 residues: Receptor activity-modifying protein 2 (189 aa).

Positions 1 to 44 are cleaved as a signal peptide; sequence MAPLRVERAPGGSRLGVTRAQRPTALCLPPLLLLLLLLLGAVSA. Topologically, residues 45–157 are extracellular; the sequence is SPESLNQSLP…VQPTFSDPPE (113 aa). The segment covering 49–61 has biased composition (polar residues); the sequence is LNQSLPESQNQSH. The disordered stretch occupies residues 49–69; the sequence is LNQSLPESQNQSHPTEDSLVS. Asn-50, Asn-58, Asn-99, and Asn-144 each carry an N-linked (GlcNAc...) asparagine glycan. Cystine bridges form between Cys-83/Cys-113 and Cys-98/Cys-145. The helical transmembrane segment at 158–179 threads the bilayer; that stretch reads DVLLAMIIAPICLIPFLVTLVV. Residues 180 to 189 lie on the Cytoplasmic side of the membrane; it reads WRSKDSDAQA.

This sequence belongs to the RAMP family. In terms of assembly, heterodimer of CALCRL and RAMP2; the interaction forms the receptor complex for adrenomedullin/ADM. Heterodimer of CALCR and RAMP2; interaction forms the AMYR2 receptor complex for calcitonin/CALC and amylin/IAPP. As to expression, ubiquitous. Expressed predominantly in embryonic brain, lung and gut and in adult heart, lung, skeletal muscle and brain.

The protein resides in the cell membrane. Accessory protein that interacts with and modulates the function of G-protein coupled receptors including calcitonin gene-related peptide type 1 receptor (CALCRL) and calcitonin receptor (CALCR). Required for the transport of CALCRL to the plasma membrane. Together with CALCRL, form a receptor complex for adrenomedullin/ADM. Together with CALCR, act as a receptor complex for calcitonin/CT/CALC. Together with CALCR, also act as a receptor complex for amylin/IAPP. In Mus musculus (Mouse), this protein is Receptor activity-modifying protein 2.